Reading from the N-terminus, the 128-residue chain is Phosphoribosyl-AMP cyclohydrolase (128 aa).

Asp77 is a binding site for Mg(2+). Zn(2+) is bound at residue Cys78. Residues Asp79 and Asp81 each contribute to the Mg(2+) site. Residues Cys95 and Cys102 each contribute to the Zn(2+) site.

The protein belongs to the PRA-CH family. Homodimer. The cofactor is Mg(2+). Requires Zn(2+) as cofactor.

The protein localises to the cytoplasm. The enzyme catalyses 1-(5-phospho-beta-D-ribosyl)-5'-AMP + H2O = 1-(5-phospho-beta-D-ribosyl)-5-[(5-phospho-beta-D-ribosylamino)methylideneamino]imidazole-4-carboxamide. Its pathway is amino-acid biosynthesis; L-histidine biosynthesis; L-histidine from 5-phospho-alpha-D-ribose 1-diphosphate: step 3/9. Functionally, catalyzes the hydrolysis of the adenine ring of phosphoribosyl-AMP. This is Phosphoribosyl-AMP cyclohydrolase from Methylococcus capsulatus (strain ATCC 33009 / NCIMB 11132 / Bath).